We begin with the raw amino-acid sequence, 725 residues long: Kelch domain-containing protein SSO1033 (725 aa).

The first 28 residues, 1–28 (MKYGNMKKWAPLILFLFSLLLLQGISLH), serve as a signal peptide directing secretion. Kelch repeat units lie at residues 59 to 100 (SLYI…VYNN), 101 to 145 (TIYV…VYNN), 146 to 199 (AIYV…FNGT), 201 to 248 (LIIV…YYRG), 250 to 297 (LFIV…QVGN), and 299 to 342 (LYLA…VTLG). Fibronectin type-III domains follow at residues 323-410 (PPLP…TPAS), 411-504 (VPNP…TKAS), 505-583 (VFAF…VVYY), and 585-665 (PPAS…TGDY).

The sequence is that of Kelch domain-containing protein SSO1033 from Saccharolobus solfataricus (strain ATCC 35092 / DSM 1617 / JCM 11322 / P2) (Sulfolobus solfataricus).